Reading from the N-terminus, the 382-residue chain is Flavin-dependent monooxygenase, oxygenase subunit HsaA (382 aa).

Residues tryptophan 72, 106–108 (SSY), 129–131 (WSS), arginine 251, 334–335 (AT), and 356–357 (HA) each bind FMN.

It belongs to the HpaH/HsaA monooxygenase family. In terms of assembly, homotetramer. HsaAB monooxygenase consists of an oxygenase component HsaA and a reductase component HsaB.

The catalysed reaction is 3-hydroxy-9,10-secoandrosta-1,3,5(10)-triene-9,17-dione + FMNH2 + O2 = 3,4-dihydroxy-9,10-secoandrosta-1,3,5(10)-triene-9,17-dione + FMN + H2O + H(+). It participates in lipid metabolism; steroid biosynthesis. In terms of biological role, catalyzes the o-hydroxylation of 3-hydroxy-9,10-secoandrosta-1,3,5(10)-triene-9,17-dione (3-HSA) to 3,4-dihydroxy-9,10-secoandrosta-1,3,5(10)-triene-9,17-dione (3,4-DHSA) in the catabolism of cholesterol. The chain is Flavin-dependent monooxygenase, oxygenase subunit HsaA (hsaA) from Rhodococcus jostii (strain RHA1).